A 473-amino-acid polypeptide reads, in one-letter code: Membrane-bound acylglycerophosphatidylinositol O-acyltransferase MBOAT7 (473 aa).

The Cytoplasmic portion of the chain corresponds to 1-5 (MTPEE). Residues 6 to 22 (WTYLMVLLISIPVGFLF) traverse the membrane as a helical segment. Residues 23-33 (KKAGPGLKRWG) are Lumenal-facing. A helical transmembrane segment spans residues 34–57 (AAAVGLGLTLFTCGPHSLHSLITI). Topologically, residues 58 to 73 (LGTWALIQAQPCSCHA) are cytoplasmic. Residues 74-93 (LALAWTFSYLLFFRALSLLG) form a helical membrane-spanning segment. Topologically, residues 94–194 (LPTPTPFTNA…VPSLRPLLRR (101 aa)) are lumenal. The helical transmembrane segment at 195–212 (AWPAPLFGLLFLLSSHLF) threads the bilayer. Residues 213–231 (PLEAVREDAFYARPLPTRL) lie on the Cytoplasmic side of the membrane. The chain crosses the membrane as a helical span at residues 232–261 (FYMIPVFFAFRMRFYVAWIAAECGCIAAGF). The Lumenal portion of the chain corresponds to 262–426 (GAYPVAAKAR…LSMADTLRYW (165 aa)). Asn-321 is a glycosylation site (N-linked (GlcNAc...) asparagine). A helical transmembrane segment spans residues 427–447 (ASIYFWVHFLALACLGLGLVL). The Cytoplasmic portion of the chain corresponds to 448–473 (GGGSPSKRKTPSQATSSQAKEKLREE). The disordered stretch occupies residues 451-473 (SPSKRKTPSQATSSQAKEKLREE).

This sequence belongs to the membrane-bound acyltransferase family. As to quaternary structure, interacts with SPTSSA; the interaction facilitates MBOAT7 location to mitochondria-associated membranes (MAMs).

Its subcellular location is the endoplasmic reticulum membrane. The catalysed reaction is a 1-acyl-sn-glycero-3-phospho-(1D-myo-inositol) + an acyl-CoA = a 1,2-diacyl-sn-glycero-3-phospho-(1D-myo-inositol) + CoA. The enzyme catalyses 1-octadecanoyl-sn-glycero-3-phospho-(1D-myo-inositol) + (5Z,8Z,11Z,14Z)-eicosatetraenoyl-CoA = 1-octadecanoyl-2-(5Z,8Z,11Z,14Z-eicosatetraenoyl)-sn-glycero-3-phospho-(1D-myo-inositol) + CoA. It carries out the reaction a 1-acyl-sn-glycero-3-phospho-(1D-myo-inositol) + (5Z,8Z,11Z,14Z)-eicosatetraenoyl-CoA = a 1-acyl-2-(5Z,8Z,11Z,14Z-eicosatetraenoyl)-sn-glycero-3-phospho-(1D-myo-inositol) + CoA. It catalyses the reaction (5Z,8Z,11Z,14Z)-eicosatetraenoyl-CoA + 1-hexadecanoyl-sn-glycero-3-phosphocholine = 1-hexadecanoyl-2-(5Z,8Z,11Z,14Z-eicosatetraenoyl)-sn-glycero-3-phosphocholine + CoA. It functions in the pathway lipid metabolism; phospholipid metabolism. Acyltransferase which catalyzes the transfer of an acyl group from an acyl-CoA to a lysophosphatidylinositol (1-acylglycerophosphatidylinositol or LPI) leading to the production of a phosphatidylinositol (1,2-diacyl-sn-glycero-3-phosphoinositol or PI) and participates in the reacylation step of the phospholipid remodeling pathway also known as the Lands cycle. Prefers arachidonoyl-CoA as the acyl donor, thus contributing to the regulation of free levels arachidonic acid in cell. In liver, participates in the regulation of triglyceride metabolism through the phosphatidylinositol acyl-chain remodeling regulation. The chain is Membrane-bound acylglycerophosphatidylinositol O-acyltransferase MBOAT7 from Mus musculus (Mouse).